Consider the following 221-residue polypeptide: Glutathione peroxidase 6 (221 aa).

An N-terminal signal peptide occupies residues 1 to 19; the sequence is MAQKLWGSCLFSLFMAALA. Residue cysteine 73 is part of the active site.

It belongs to the glutathione peroxidase family.

It is found in the secreted. It carries out the reaction 2 glutathione + H2O2 = glutathione disulfide + 2 H2O. This Mus musculus (Mouse) protein is Glutathione peroxidase 6 (Gpx6).